Consider the following 707-residue polypeptide: MAIDKELQFTRNIGIMAHIDAGKTTTSERILFYTGLTHKIGEVHDGAATMDWMEQEQERGITITSAATTAFWNYNNQKYKINLIDTPGHVDFTVEVERSLRILDGAVAAFCAVGGVEPQSETVWRQAEKYNVPRIGYVNKMDRSGANFFEVVRQLREVLGANPCPIQIPIGAEETFKGVVDLVSMKALVWNDETMGAKYDVEDIPAELVGEAEEWRDKMLETLADCDDTLMEKYFDDPSTITEDEIIAALRKGTLAMQINPMLCGSSFKNKGVQTLLDAVCKFLPSPADTPTVEGTDPSDPNKVIERKTSPNEPLCALAFKIATDPYVGRLCFFRVYSGELPAGSYVYNARSEKKERISRLFQMHSNKQNPKEVIGCGDIGAGVGFKDIRTGDTLCDENHPIVLESMDFPDPVIGIAVEPKTQKDLDRLGVGLAKLAEEDPTFRVQTNEDSGQTVISGMGELHLDIIIDRLRREFKVECNQGRPQVSYKEAINDPVELREVYKKQTGGRGKFADIICRVEPADADFEGELQFVDEVKGGNIPKEFIPSIQKGFQRAMKNGVLAGYPLDQLKVTVIDGSFHPVDSDQLSFEICALQAFKNACEKAHPTLMEPIMKLEVVTPEESMGDVIGDLNKRRGQVEGMESSRTGARIVKAKVPLAEMFGYVTALRTITSGRATSTMTFSHYSEVPSTIAKQVLTEAQGRVDLIK.

The 281-residue stretch at 8–288 folds into the tr-type G domain; it reads QFTRNIGIMA…AVCKFLPSPA (281 aa). Residues 17–24, 85–89, and 139–142 each bind GTP; these read AHIDAGKT, DTPGH, and NKMD. The tract at residues 288 to 308 is disordered; it reads ADTPTVEGTDPSDPNKVIERK.

The protein belongs to the TRAFAC class translation factor GTPase superfamily. Classic translation factor GTPase family. EF-G/EF-2 subfamily.

The protein resides in the cytoplasm. Catalyzes the GTP-dependent ribosomal translocation step during translation elongation. During this step, the ribosome changes from the pre-translocational (PRE) to the post-translocational (POST) state as the newly formed A-site-bound peptidyl-tRNA and P-site-bound deacylated tRNA move to the P and E sites, respectively. Catalyzes the coordinated movement of the two tRNA molecules, the mRNA and conformational changes in the ribosome. This Porphyromonas gingivalis (strain ATCC 33277 / DSM 20709 / CIP 103683 / JCM 12257 / NCTC 11834 / 2561) protein is Elongation factor G.